The primary structure comprises 251 residues: MSGHSKWATTKHKKAVIDARRGKLFAKLIKTVEVAAKTGGGDPAGNPTLADAIAKAKSQSVPNDNIERAVKRGSGELAGGVNYEDITYEAYGPGGVAILVECLTDNRNRAASDVRVAITRNGGTVADPGSVSYLFNRKGVVLIEKTAGLTEDDVLLAVLDAGAEEVNDVGEAFEVVSEATDLHAVRVAATDAGLAVTSADISWLPSVSVSLEAEPAAKVLKLIEAVEDLDDVQNVWFNADISDDVMELVGS.

It belongs to the TACO1 family.

Its subcellular location is the cytoplasm. The polypeptide is Probable transcriptional regulatory protein Francci3_1368 (Frankia casuarinae (strain DSM 45818 / CECT 9043 / HFP020203 / CcI3)).